A 286-amino-acid polypeptide reads, in one-letter code: Tyrosine recombinase Tlet_1492 (286 aa).

The Core-binding (CB) domain maps to 1 to 86 (MERILQNFSD…SLRSFFNYLQ (86 aa)). One can recognise a Tyr recombinase domain in the interval 107–280 (RIPDFLLPSE…VDQEKFDAIN (174 aa)). Catalysis depends on residues R143, K168, H232, R235, and H258. Residue Y267 is the O-(3'-phospho-DNA)-tyrosine intermediate of the active site.

The protein belongs to the 'phage' integrase family.

It localises to the cytoplasm. Functionally, site-specific tyrosine recombinase, which acts by catalyzing the cutting and rejoining of the recombining DNA molecules. The sequence is that of Tyrosine recombinase Tlet_1492 from Pseudothermotoga lettingae (strain ATCC BAA-301 / DSM 14385 / NBRC 107922 / TMO) (Thermotoga lettingae).